The chain runs to 509 residues: Probable triacylglyceride transporter ML0556 (509 aa).

13 consecutive transmembrane segments (helical) span residues 48–68 (RITWIVTMYLLGYIAAMPLLS), 78–98 (LLLQVSLAGFAIGSVMTALAG), 112–132 (IQGVASGALLPITLALGADLW), 146–166 (AAQELGSVLGPLYGIFIVWLF), 171–191 (YVFWINIPLTAIAMLMIQVSL), 203–223 (VDVVGGVLLAIALGLVVIGLY), 232–252 (VLPSYGVPVLVGGIVATVAFA), 272–292 (PFLSALGASVAAGAALMVTLV), 309–329 (AAGLLVWFLIALPIGAVLGGW), 339–359 (MTFVGLLITAGGYWLISHWPV), 381–403 (LLVAGLGLGLVIGPLSSATLRVV), 410–430 (IASAAVVVARMTGMLIGVAAL), and 477–497 (IFMITAIVCVIGALLGLLISS).

The protein belongs to the major facilitator superfamily.

It localises to the cell inner membrane. In terms of biological role, in association with lipoprotein LprG probably transports triacylglycerides (TAG) across the inner cell membrane into the periplasm; TAG probably regulates lipid metabolism and growth regulation. May be an efflux transporter and involved in maintaining correct cell wall permeability. Probably required with LprG for normal surface localization of lipoarabinomannan (LAM). This Mycobacterium leprae (strain TN) protein is Probable triacylglyceride transporter ML0556.